We begin with the raw amino-acid sequence, 1500 residues long: Alpha-1-macroglobulin (1500 aa).

A signal peptide spans 1–24; that stretch reads MRRNQLPIPVFLLLLLLLPRDATA. An intrachain disulfide couples cysteine 48 to cysteine 86. Asparagine 55, asparagine 61, and asparagine 157 each carry an N-linked (GlcNAc...) asparagine glycan. Cystine bridges form between cysteine 249/cysteine 298 and cysteine 267/cysteine 286. Asparagine 382 and asparagine 412 each carry an N-linked (GlcNAc...) asparagine glycan. Cysteine 469 and cysteine 562 are disulfide-bonded. Asparagine 568 is a glycosylation site (N-linked (GlcNAc...) asparagine). 6 disulfides stabilise this stretch: cysteine 594–cysteine 785, cysteine 642–cysteine 689, cysteine 835–cysteine 863, cysteine 861–cysteine 897, cysteine 935–cysteine 1344, and cysteine 1094–cysteine 1142. The segment at 686 to 746 is bait region; sequence PRYCPMYQAY…QEVEVRETVR (61 aa). Asparagine 883 and asparagine 944 each carry an N-linked (GlcNAc...) asparagine glycan. Residues 986 to 989 constitute a cross-link (isoglutamyl cysteine thioester (Cys-Gln)); sequence CGEQ. Residue asparagine 1005 is glycosylated (N-linked (GlcNAc...) asparagine). A receptor-binding domain region spans residues 1360–1500; the sequence is EGEAPFTLKV…FSSDSEQGNA (141 aa). N-linked (GlcNAc...) asparagine glycosylation is found at asparagine 1390 and asparagine 1448.

Belongs to the protease inhibitor I39 (alpha-2-macroglobulin) family. Homotetramer; disulfide-linked. In terms of tissue distribution, widely expressed. Highest level in ovary, testis, uterus and prostate. Protein found in plasma.

The protein localises to the secreted. Functionally, is able to inhibit all four classes of proteinases by a unique 'trapping' mechanism. This protein has a peptide stretch, called the 'bait region' which contains specific cleavage sites for different proteinases. When a proteinase cleaves the bait region, a conformational change is induced in the protein which traps the proteinase. The entrapped enzyme remains active against low molecular weight substrates (activity against high molecular weight substrates is greatly reduced). Following cleavage in the bait region a thioester bond is hydrolyzed and mediates the covalent binding of the protein to the proteinase. The chain is Alpha-1-macroglobulin from Rattus norvegicus (Rat).